The sequence spans 213 residues: Neuroligin-4, X-linked (213 aa).

The disordered stretch occupies residues 1–56; sequence FQYVSTTTKVPPPDMTSFPYGTRRSPAKIWPTTKRPAITPANNPKHSKDPHKTGPE. Residues 1-73 lie on the Extracellular side of the membrane; it reads FQYVSTTTKV…TKRDYSTELS (73 aa). Basic and acidic residues predominate over residues 46–55; sequence HSKDPHKTGP. The chain crosses the membrane as a helical span at residues 74–94; sequence VTIAVGASLLFLNILAFAALY. Over 95–213 the chain is Cytoplasmic; sequence YKKDKRRHET…LPHGHSTTRV (119 aa). A Phosphoserine modification is found at S109.

The protein belongs to the type-B carboxylesterase/lipase family. As to quaternary structure, homodimer. Interacts with NRXN1 in a calcium-dependent manner. Interaction with neurexins is mediated by heparan sulfate glycan modification on neurexin. Interacts through its C-terminus with DLG4/PSD-95 third PDZ domain.

The protein resides in the cell membrane. Its subcellular location is the postsynaptic density membrane. Cell surface protein involved in cell-cell-interactions via its interactions with neurexin family members. This is Neuroligin-4, X-linked (NLGN4X) from Macaca mulatta (Rhesus macaque).